Consider the following 102-residue polypeptide: UPF0328 protein ECU10_1820 (102 aa).

It belongs to the UPF0328 family.

This chain is UPF0328 protein ECU10_1820, found in Encephalitozoon cuniculi (strain GB-M1) (Microsporidian parasite).